Here is a 90-residue protein sequence, read N- to C-terminus: UPF0237 protein MJ1558 (90 aa).

The ACT domain occupies 5 to 79 (VVSVIGQDRT…EELGVQVIVQ (75 aa)).

This sequence belongs to the UPF0237 family.

The chain is UPF0237 protein MJ1558 from Methanocaldococcus jannaschii (strain ATCC 43067 / DSM 2661 / JAL-1 / JCM 10045 / NBRC 100440) (Methanococcus jannaschii).